The primary structure comprises 40 residues: ECADVYKECWYPEKPCCKDRACQCSLGMNCKCKATLGDIF.

4 disulfide bridges follow: cysteine 2-cysteine 17, cysteine 9-cysteine 22, cysteine 16-cysteine 32, and cysteine 24-cysteine 30.

As to expression, expressed by the venom gland.

Its subcellular location is the secreted. Its function is as follows. Neurotoxin. The polypeptide is U2-ctenitoxin-Pr1a (Phoneutria reidyi (Brazilian Amazonian armed spider)).